Here is a 383-residue protein sequence, read N- to C-terminus: F-box/kelch-repeat protein At2g29830 (383 aa).

Residues 1–21 (MVVLSEIPGDPNEDNQNENPQ) are disordered. A compositionally biased stretch (acidic residues) spans 11–21 (PNEDNQNENPQ). In terms of domain architecture, F-box spans 27–73 (LPILLQLPEELIASIVALIPRCHYPSLSLVSRAFRHLITSQELYVAR). Kelch repeat units follow at residues 130-178 (KMYV…IIDG), 179-224 (RIYV…FITY), 226-272 (VMQG…VVGD), 274-317 (LYAL…YTST), and 324-370 (KLVI…RDLP).

The polypeptide is F-box/kelch-repeat protein At2g29830 (Arabidopsis thaliana (Mouse-ear cress)).